Here is an 88-residue protein sequence, read N- to C-terminus: Small ribosomal subunit protein bS16c (88 aa).

In terms of assembly, component of the chloroplast small ribosomal subunit (SSU). Mature 70S chloroplast ribosomes of higher plants consist of a small (30S) and a large (50S) subunit. The 30S small subunit contains 1 molecule of ribosomal RNA (16S rRNA) and 24 different proteins. The 50S large subunit contains 3 rRNA molecules (23S, 5S and 4.5S rRNA) and 33 different proteins.

The protein localises to the plastid. Its subcellular location is the chloroplast. Functionally, component of the chloroplast ribosome (chloro-ribosome), a dedicated translation machinery responsible for the synthesis of chloroplast genome-encoded proteins, including proteins of the transcription and translation machinery and components of the photosynthetic apparatus. The protein is Small ribosomal subunit protein bS16c of Spinacia oleracea (Spinach).